A 153-amino-acid chain; its full sequence is MKHWKRRSSAVFAIVLQVLVLLLPDPAVAMTMEQFLTSLDMIRSGCAPKFKLKTEDLDRLRVGDFNFPPSQDLMCYTKCVSLMAGTVNKKGEFNAPKALAQLPHLVPPEMMEMSRKSVEACRDTHKQFKESCERVYQTAKCFSENADGQFMWP.

Positions 1–29 are cleaved as a signal peptide; that stretch reads MKHWKRRSSAVFAIVLQVLVLLLPDPAVA. Disulfide bonds link Cys-46-Cys-79, Cys-75-Cys-132, and Cys-121-Cys-141. Residues Ser-81 and Thr-86 each coordinate 1-propanol. Butan-1-ol-binding residues include Ser-81 and Thr-86. 2 residues coordinate ethanol: Ser-81 and Thr-86.

The protein belongs to the PBP/GOBP family. Specifically expressed in chemosensory system in both males and females. Expressed in a subset of trichoid chemosensory sensilla located on the ventral-lateral surface of the third antennal segment. Secreted from non-neuronal support cells into the sensillum lymph that bathes the olfactory neurons within these sensilla.

Its subcellular location is the secreted. Its function is as follows. Odorant-binding protein required for olfactory behavior and for activity of pheromone-sensitive neurons. Binds to alcohols and mediates avoidance behavior to high concentrations of alcohols, the alcohol-binding possibly resulting in activation of receptors on T2B neurons, the activation of these receptors inhibiting these neurons. Acts in concert with Snmp and lush to capture cVA molecules on the surface of Or67d expressing olfactory dendrites and facilitate their transfer to the odorant-receptor Orco complex. Required for cVA response, probably by binding to VA. May act by serving as an adapter that bridges the presence of gaseous pheromone molecules, cVA, to activation of specific neuronal receptors expressed on T1 olfactory neurons, possibly via a specific conformational change induced by cVA that in turn activates T1 receptors. T1 neurons are excited by the pheromone VA, while T2 neurons are inhibited by alcohols. Also binds to phthalates. This is General odorant-binding protein lush (lush) from Drosophila melanogaster (Fruit fly).